The chain runs to 34 residues: Photosystem II reaction center protein Psb30 (34 aa).

A helical membrane pass occupies residues 6-26; sequence VIGQLIATGAIMLAGPAVIVL.

Belongs to the Psb30/Ycf12 family. In terms of assembly, PSII is composed of 1 copy each of membrane proteins PsbA, PsbB, PsbC, PsbD, PsbE, PsbF, PsbH, PsbI, PsbJ, PsbK, PsbL, PsbM, PsbT, PsbX, PsbY, PsbZ, Psb30/Ycf12, peripheral proteins of the oxygen-evolving complex and a large number of cofactors. It forms dimeric complexes.

The protein localises to the plastid. The protein resides in the chloroplast thylakoid membrane. In terms of biological role, a core subunit of photosystem II (PSII), probably helps stabilize the reaction center. This Trieres chinensis (Marine centric diatom) protein is Photosystem II reaction center protein Psb30.